Here is a 210-residue protein sequence, read N- to C-terminus: Somatotropin (210 aa).

The signal sequence occupies residues 1-22; it reads MAKALVLLSLVLVSVFVNNGTA. H38 lines the Zn(2+) pocket. C71 and C183 form a disulfide bridge. Position 192 (E192) interacts with Zn(2+). C200 and C208 form a disulfide bridge.

Belongs to the somatotropin/prolactin family.

It localises to the secreted. Functionally, growth hormone plays an important role in growth control and is involved in the regulation of several anabolic processes. Implicated as an osmoregulatory substance important for seawater adaptation. The chain is Somatotropin (gh) from Misgurnus mizolepis (Chinese weatherloach).